We begin with the raw amino-acid sequence, 337 residues long: MVREKVTVSTRTLQWKCVESRTDSKRLYYGRFILSPLMKGQADTIGIAMRRALLGEIEGTCITRVKFEKVPHEYSTITGIQESVHEIIMNLKEIVLRSNLYGTSEASVCVKGPGYVTAQDIILPPYVEIVDNTQHIASLTEPIDFCIGLQIERNRGYLIKTPQNFQDGSYPIDAVFMPVRNANHSIHSYGNGNEKQEILFLEIWTNGSLTPKEALHEASRNLIDLFIPFLHMEEDNLYLQDNQHTVPLSPFTFHDKLAKLIKNNKKIALKSIFIDQSELPSRIYNCLKMSNIYTLLDLLNNSQEDLMKIEHFRSEDIKQILGILEKYFVIDLAKNKF.

An alpha N-terminal domain (alpha-NTD) region spans residues 1 to 233 (MVREKVTVST…DLFIPFLHME (233 aa)). The segment at 264–337 (NKKIALKSIF…FVIDLAKNKF (74 aa)) is alpha C-terminal domain (alpha-CTD).

Belongs to the RNA polymerase alpha chain family. In plastids the minimal PEP RNA polymerase catalytic core is composed of four subunits: alpha, beta, beta', and beta''. When a (nuclear-encoded) sigma factor is associated with the core the holoenzyme is formed, which can initiate transcription.

Its subcellular location is the plastid. The protein localises to the chloroplast. The enzyme catalyses RNA(n) + a ribonucleoside 5'-triphosphate = RNA(n+1) + diphosphate. Functionally, DNA-dependent RNA polymerase catalyzes the transcription of DNA into RNA using the four ribonucleoside triphosphates as substrates. This chain is DNA-directed RNA polymerase subunit alpha, found in Atropa belladonna (Belladonna).